Here is a 342-residue protein sequence, read N- to C-terminus: Cyclin-D3-1 (342 aa).

Positions 322–334 (VGSPATNYESSAS) are enriched in polar residues. A disordered region spans residues 322–342 (VGSPATNYESSASSKRRRICR).

It belongs to the cyclin family. Cyclin D subfamily.

The protein is Cyclin-D3-1 (CYCD3-1) of Oryza sativa subsp. japonica (Rice).